We begin with the raw amino-acid sequence, 67 residues long: MKLQNTLILIGCLFLMGAMIGDAYSRCQLQGFNCVVRSYGLPTIPCCRGLTCRSYFPGSTYGRCQRY.

The signal sequence occupies residues 1-23 (MKLQNTLILIGCLFLMGAMIGDA). 3 cysteine pairs are disulfide-bonded: cysteine 27/cysteine 47, cysteine 34/cysteine 52, and cysteine 46/cysteine 64.

As to expression, granular hemocytes, small secretory granules.

The protein localises to the secreted. Exhibits stronger antimicrobial activity against the Gram-positive bacteria (S.aureus (IC(50)=4.2 ug/ml)) and fungi (C.albicans (IC(50)=3.0 ug/ml) and P.pastoris (IC(50)=0.5 ug/ml)) than Gram-negative bacteria (E.coli (IC(50)=25 ug/ml)). Binds to chitin (8.4 uM are required to obtain 50% of binding). Does not cause hemolysis on sheep erythrocytes. Has no blocking activity on the P-type calcium channel. Has also been shown to weakly inhibit Kv1.2/KCNA2 voltage-gated potassium channels and TRPV1 receptors. The polypeptide is Tachystatin-A2 (Tachypleus tridentatus (Japanese horseshoe crab)).